We begin with the raw amino-acid sequence, 426 residues long: Pannexin-1 (426 aa).

Over 1–40 (MAIAQLATEYVFSDFLLKEPTEPKFKGLRLELAVDKMVTC) the chain is Cytoplasmic. Position 40 is an S-nitrosocysteine (Cys40). The chain crosses the membrane as a helical span at residues 41-61 (IAVGLPLLLISLAFAQEISIG). Residues 62–106 (TQISCFSPSSFSWRQAAFVDSYCWAAVQQKNSLQSESGNLPLWLH) lie on the Extracellular side of the membrane. Intrachain disulfides connect Cys66–Cys265 and Cys84–Cys246. Residues 107 to 127 (KFFPYILLLFAILLYLPPLFW) form a helical membrane-spanning segment. The Cytoplasmic segment spans residues 128–217 (RFAAAPHICS…NLIIKYISCR (90 aa)). Tyr199 is modified (phosphotyrosine). A helical membrane pass occupies residues 218-238 (LLTLIIILLACIYLGYYFSLS). Residues 239-266 (SLSDEFVCSIKSGILRNDSTVPDQFQCK) lie on the Extracellular side of the membrane. Asn255 carries N-linked (GlcNAc...) asparagine glycosylation. The helical transmembrane segment at 267–287 (LIAVGIFQLLSVINLVVYVLL) threads the bilayer. Residues 288-426 (APVVVYTLFV…ARQRLLDSSC (139 aa)) are Cytoplasmic-facing. At Cys347 the chain carries S-nitrosocysteine. The segment covering 405-414 (DSETKANNGE) has biased composition (polar residues). The interval 405 to 426 (DSETKANNGEKNARQRLLDSSC) is disordered. Residues 415–426 (KNARQRLLDSSC) are compositionally biased toward basic and acidic residues.

It belongs to the pannexin family. In terms of assembly, homoheptameric. S-nitrosylation inhibits channel currents and ATP release. Post-translationally, N-glycosylation plays a role in cell surface targeting. Glycosylation at its extracellular surface makes unlikely that two oligomers could dock to form an intercellular channel such as in gap junctions. Exists in three glycosylation states: non-glycosylated (GLY0), high-mannose glycosylated (GLY1), and fully mature glycosylated (GLY2). In terms of processing, cleaved by CASP3 and CASP7 during apoptosis. Cleavage opens the channel for the release of metabolites and induces plasma membrane permeability during apoptosis. Phosphorylated at Tyr-199 by SRC. Phosphorylation activates ATP release. Constitutively phosphorylated in vascular smooth muscle cells. In terms of tissue distribution, widely expressed. Highest expression is observed in oocytes and brain. Detected at very low levels in sperm cells.

It is found in the cell membrane. Its subcellular location is the endoplasmic reticulum membrane. It carries out the reaction chloride(in) = chloride(out). The catalysed reaction is iodide(out) = iodide(in). The enzyme catalyses ATP(in) = ATP(out). It catalyses the reaction K(+)(in) = K(+)(out). It carries out the reaction Ca(2+)(in) = Ca(2+)(out). The catalysed reaction is Na(+)(in) = Na(+)(out). The enzyme catalyses nitrate(in) = nitrate(out). It catalyses the reaction L-aspartate(out) = L-aspartate(in). It carries out the reaction L-glutamate(out) = L-glutamate(in). The catalysed reaction is D-gluconate(in) = D-gluconate(out). The enzyme catalyses spermidine(in) = spermidine(out). Its function is as follows. Ion channel involved in a variety of physiological functions such as blood pressure regulation, apoptotic cell clearance and oogenesis. Forms anion-selective channels with relatively low conductance and an order of permeabilities: nitrate&gt;iodide&gt;chlroride&gt;&gt;aspartate=glutamate=gluconate. Can release ATP upon activation through phosphorylation or cleavage at C-terminus. May play a role as a Ca(2+)-leak channel to regulate ER Ca(2+) homeostasis. Functionally, during apoptosis, the C terminal tail is cleaved by caspases, which opens the main pore acting as a large-pore ATP efflux channel with a broad distribution, which allows the regulated release of molecules and ions smaller than 1 kDa, such as nucleotides ATP and UTP, and selective plasma membrane permeability to attract phagocytes that engulf the dying cells. The polypeptide is Pannexin-1 (Homo sapiens (Human)).